Here is a 622-residue protein sequence, read N- to C-terminus: 1-deoxy-D-xylulose-5-phosphate synthase (622 aa).

Residues histidine 80 and 121–123 (GHS) contribute to the thiamine diphosphate site. Aspartate 152 is a Mg(2+) binding site. Thiamine diphosphate contacts are provided by residues 153–154 (GA), asparagine 181, tyrosine 288, and glutamate 369. Asparagine 181 is a Mg(2+) binding site.

It belongs to the transketolase family. DXPS subfamily. As to quaternary structure, homodimer. The cofactor is Mg(2+). It depends on thiamine diphosphate as a cofactor.

The catalysed reaction is D-glyceraldehyde 3-phosphate + pyruvate + H(+) = 1-deoxy-D-xylulose 5-phosphate + CO2. Its pathway is metabolic intermediate biosynthesis; 1-deoxy-D-xylulose 5-phosphate biosynthesis; 1-deoxy-D-xylulose 5-phosphate from D-glyceraldehyde 3-phosphate and pyruvate: step 1/1. Functionally, catalyzes the acyloin condensation reaction between C atoms 2 and 3 of pyruvate and glyceraldehyde 3-phosphate to yield 1-deoxy-D-xylulose-5-phosphate (DXP). This Psychromonas ingrahamii (strain DSM 17664 / CCUG 51855 / 37) protein is 1-deoxy-D-xylulose-5-phosphate synthase.